The chain runs to 479 residues: Aspartyl/glutamyl-tRNA(Asn/Gln) amidotransferase subunit B (479 aa).

Belongs to the GatB/GatE family. GatB subfamily. Heterotrimer of A, B and C subunits.

It carries out the reaction L-glutamyl-tRNA(Gln) + L-glutamine + ATP + H2O = L-glutaminyl-tRNA(Gln) + L-glutamate + ADP + phosphate + H(+). It catalyses the reaction L-aspartyl-tRNA(Asn) + L-glutamine + ATP + H2O = L-asparaginyl-tRNA(Asn) + L-glutamate + ADP + phosphate + 2 H(+). Its function is as follows. Allows the formation of correctly charged Asn-tRNA(Asn) or Gln-tRNA(Gln) through the transamidation of misacylated Asp-tRNA(Asn) or Glu-tRNA(Gln) in organisms which lack either or both of asparaginyl-tRNA or glutaminyl-tRNA synthetases. The reaction takes place in the presence of glutamine and ATP through an activated phospho-Asp-tRNA(Asn) or phospho-Glu-tRNA(Gln). This is Aspartyl/glutamyl-tRNA(Asn/Gln) amidotransferase subunit B from Myxococcus xanthus (strain DK1622).